The following is a 351-amino-acid chain: Transcription elongation factor A N-terminal and central domain-containing protein (351 aa).

One can recognise a TFIIS N-terminal domain in the interval 5–82 (NQIAARASLI…SKWKAVYKQT (78 aa)). Disordered regions lie at residues 86–119 (ARNS…GICS) and 144–169 (LKPK…LLDP). The segment covering 103–119 (SGPSHDPSQNETLGICS) has biased composition (polar residues). The segment covering 145 to 165 (KPKEEHFGDGDPESTGKRSSE) has biased composition (basic and acidic residues). The TFIIS central domain occupies 173 to 289 (MRTKCIELLY…EHYLPQVIDG (117 aa)).

In Homo sapiens (Human), this protein is Transcription elongation factor A N-terminal and central domain-containing protein (TCEANC).